We begin with the raw amino-acid sequence, 234 residues long: MSGLPIATNLYFDAHFHRRGVKLLPNEFYTTREDMVLVTVLGSCVAACLHDPIARIGGMNHFMLPDDGADPSAAASESMRYGAYAMEVLINELIKAGGRRERFEAKVFGGAAVLAGMTTINIGDRNADFVRRYLALERIRITAEDLQGVHPRKVAFMPHTGQAMVKKLRVQAPDVAEREAALAREAAGPRGERAARARPRVELFGTPAPKAQATPRIELFGTRATQPATRKQEA.

Residues 183–234 form a disordered region; sequence AREAAGPRGERAARARPRVELFGTPAPKAQATPRIELFGTRATQPATRKQEA. Residues 190–201 show a composition bias toward basic and acidic residues; that stretch reads RGERAARARPRV. Positions 223 to 234 are enriched in polar residues; it reads RATQPATRKQEA.

It belongs to the CheD family.

The enzyme catalyses L-glutaminyl-[protein] + H2O = L-glutamyl-[protein] + NH4(+). Functionally, probably deamidates glutamine residues to glutamate on methyl-accepting chemotaxis receptors (MCPs), playing an important role in chemotaxis. This chain is Probable chemoreceptor glutamine deamidase CheD 1, found in Burkholderia thailandensis (strain ATCC 700388 / DSM 13276 / CCUG 48851 / CIP 106301 / E264).